Here is a 255-residue protein sequence, read N- to C-terminus: GTP cyclohydrolase FolE2 (255 aa).

This sequence belongs to the GTP cyclohydrolase IV family.

It carries out the reaction GTP + H2O = 7,8-dihydroneopterin 3'-triphosphate + formate + H(+). The protein operates within cofactor biosynthesis; 7,8-dihydroneopterin triphosphate biosynthesis; 7,8-dihydroneopterin triphosphate from GTP: step 1/1. Functionally, converts GTP to 7,8-dihydroneopterin triphosphate. The chain is GTP cyclohydrolase FolE2 from Syntrophus aciditrophicus (strain SB).